Consider the following 215-residue polypeptide: Cytochrome b6 (215 aa).

A helical transmembrane segment spans residues 32-52; the sequence is IFYCLGGITLTCFLIQFATGF. Residue Cys-35 coordinates heme c. Heme b-binding residues include His-86 and His-100. 3 helical membrane passes run 90-110, 116-136, and 186-206; these read ASMM…TGGF, LTWV…VTGY, and LHTF…FLMI. His-187 and His-202 together coordinate heme b.

This sequence belongs to the cytochrome b family. PetB subfamily. The 4 large subunits of the cytochrome b6-f complex are cytochrome b6, subunit IV (17 kDa polypeptide, PetD), cytochrome f and the Rieske protein, while the 4 small subunits are PetG, PetL, PetM and PetN. The complex functions as a dimer. Heme b serves as cofactor. The cofactor is heme c.

The protein localises to the cellular thylakoid membrane. Functionally, component of the cytochrome b6-f complex, which mediates electron transfer between photosystem II (PSII) and photosystem I (PSI), cyclic electron flow around PSI, and state transitions. The protein is Cytochrome b6 of Synechococcus elongatus (strain ATCC 33912 / PCC 7942 / FACHB-805) (Anacystis nidulans R2).